The chain runs to 884 residues: Lon protease homolog 2, peroxisomal (884 aa).

The region spanning 12–255 is the Lon N-terminal domain; it reads LAILPFRNKV…KATELVDRHL (244 aa). The disordered stretch occupies residues 67–101; sequence SLLSPGVGSDSGEGGSKAPGGSAGESTKQDTKNGK. Positions 75 to 89 are enriched in gly residues; the sequence is SDSGEGGSKAPGGSA. 408 to 415 is an ATP binding site; it reads GPPGVGKT. In terms of domain architecture, Lon proteolytic spans 689-874; the sequence is VASPGVSVGL…EEVLDHAFEG (186 aa). Catalysis depends on residues serine 780 and lysine 823. Residues 882 to 884 carry the Microbody targeting signal motif; it reads SKL.

Belongs to the peptidase S16 family. Expressed in roots, leaves and panicles.

It localises to the peroxisome matrix. The enzyme catalyses Hydrolysis of proteins in presence of ATP.. ATP-dependent serine protease that mediates the selective degradation of misfolded and unassembled polypeptides in the peroxisomal matrix. Necessary for type 2 peroxisome targeting signal (PTS2)-containing protein processing and facilitates peroxisome matrix protein import. The polypeptide is Lon protease homolog 2, peroxisomal (LON1) (Oryza sativa subsp. indica (Rice)).